The sequence spans 234 residues: Large ribosomal subunit protein uL1 (234 aa).

Belongs to the universal ribosomal protein uL1 family. Part of the 50S ribosomal subunit.

Binds directly to 23S rRNA. The L1 stalk is quite mobile in the ribosome, and is involved in E site tRNA release. Its function is as follows. Protein L1 is also a translational repressor protein, it controls the translation of the L11 operon by binding to its mRNA. The protein is Large ribosomal subunit protein uL1 of Campylobacter fetus subsp. fetus (strain 82-40).